The following is a 269-amino-acid chain: MKTEGIKSPSAKYHDMAGSQRIPHKNPHIQKVAVLQSKPNKEDALNLIKEIAHKVSYLMKENHFKVTNLVEFYPRDQRLLGMNVNHGSKIMLRLRCSTDEFQFLPMECIMGTMLHELTHNLFGPHDKKFYNKLDELIGRQWVIEQRGLYDTFLGNGQRLGGRANLRSNRYPMTGISTNTGIVRKRGKGVKLGSLHPEGISSIDRGNSPRELAAFAAERRYRDDRWCGETKNNKDQIISDNISSSLEVVILDDDDEVLPGDTLIEVIDLT.

The segment at 1-22 (MKTEGIKSPSAKYHDMAGSQRI) is disordered. Residues 20–221 (QRIPHKNPHI…AAFAAERRYR (202 aa)) enclose the WLM domain. Histidine 115 contacts Zn(2+). Residue glutamate 116 is part of the active site. The Zn(2+) site is built by histidine 119 and histidine 125. The short motif at 152–160 (FLGNGQRLG) is the SHP box element. The segment at 161–208 (GRANLRSNRYPMTGISTNTGIVRKRGKGVKLGSLHPEGISSIDRGNSP) is required and sufficient for binding to DNA. Residues 209 to 219 (RELAAFAAERR) carry the VCP-interaction motif (VIM) motif. Residues 247-254 (VVILDDDD) carry the SUMO interaction motif 1 (SIM) motif. An SUMO interaction motif 2 (SIM) motif is present at residues 266–269 (IDLT).

It belongs to the peptidase M3 family. WSS1-like metalloprotease (WLM) subfamily. Binds to DNA. Interacts with CDC48 and SMT3. Interacts with PSY2 and TOF1. It depends on Zn(2+) as a cofactor.

The protein resides in the nucleus. With respect to regulation, inactivated by EDTA. Functionally, metalloendopeptidase that acts selectively on DNA-binding proteins. DNA is needed to bring the protease and substrates together to enable proteolysis. Involved in the repair of toxic DNA-protein cross-links (DPCs) such as covalently trapped topoisomerase 1 (TOP1) adducts on DNA lesions or DPCs induced by reactive compounds such as formaldehyde. Involved in DNA damage response and processing of stalled or collapsed replication forks by removing the covalently trapped TOP1 from chromatin. DPC proteolysis enables the repair of the lesions via downstream DNA repair pathways. May be recruited to DPCs via the SUMOylation of substrate proteins at damaged DNA sites. The sequence is that of DNA-dependent metalloprotease WSS1 (WSS1) from Saccharomyces cerevisiae (strain ATCC 204508 / S288c) (Baker's yeast).